The chain runs to 1119 residues: MSFLDSVLKAFVGDKSKKDVKEIQPIVNKIKALESEFEALSLDELRAKTSEFKAKIAEATKEVEDKIVALNKEADEIDDITRKEDIYAEVDALKEKSYEISEAVLNDILPEAFATVKETAKRFVNNTQLKVKASSFDREISAEKDYVTLEDDHAIWSNSWDAAGKPVTWDMVHYDVQLIGGVAMHQGKIAEMQTGEGKTLVATLPMYLNALTGNGVHLVTVNDYLAKRDSAWMAPIFQFHGMSVDCVDYHRPNSAARRKAYNADITYGTNNEFGFDYLRDNMSHAPDDLVQRPHNYAIVDEVDSVLVDDARTPLIISGPVPKGDTHEFMELKPAIANIVEVQRKHLVKVLSEAKKLIKEGDTKEGGFQLLRVYRGLPKNKALIKFLSEEGIKQLLQKTENHYMQDNNREMPKVDAELYFTIEEKSNQIDLTDKGIEFLSGKDEPDFFVMPEIGMEIAKIEKEGFPAEEEAEKKEELFRDYSVKSERIHTLRQLLKSYTLFEKDTEYVVIDNKVKIVDEQTGRIMEGRRYSDGLHQAIEAKENVKIEDATQTFATVTLQNYFRMYGKLSGMTGTAVTEAGELWEIYKLDVVEIPTNRPIARNDKEDLVYKTKREKYNAVIDHVTDLSNAGRPVLIGTTSVEISELLSRMLKLRNVPHNVLNAKRHKQEADIVAEAGNSGIVTIATNMAGRGTDIKLSKEVKEAGGLAIVGTERHDSRRVDRQLRGRAGRQGDPGSSQFYVSLEDNLMRLFGSERIAKLMDRMGLEEGEVIQHSMISKSIERAQKKVEENNFGVRKRLLEYDDVMNAQREVIYKRRYHALFGERLRVDLANMIFDISESITETNKAAEDFKNFEFELIRNFSMSSPVSEEEFKKMNAQKLAGEVYKSAYKHYDEKMSHNAERAFPVIKQVHEDERNNFERISVPFTDGTKTLSVVTNLEKAYETEGKQLIKDFEKNITLAIIDDAWKTHLRKMDELKQSVQLAVHEQKDPLLIYKFEAFELFKVMLENVNRDVMSFLFKGEIPSTGAPSIHEARQTKSKEKVETRKEEIPNMDERAAQSRAAGNTQRQQPEVTETIVRDRPKIGRNDKVTVKNVMSGESKTMKFKQAIPLLDKGDWVLVEE.

ATP is bound by residues glutamine 177, glycine 195–threonine 199, and aspartate 692. The tract at residues alanine 1025–isoleucine 1081 is disordered. Residues histidine 1029 to alanine 1055 show a composition bias toward basic and acidic residues. Residues alanine 1059–valine 1070 show a composition bias toward polar residues.

Belongs to the SecA family. As to quaternary structure, monomer and homodimer. Part of the essential Sec protein translocation apparatus which comprises SecA, SecYEG and auxiliary proteins SecDF. Other proteins may also be involved.

Its subcellular location is the cell inner membrane. The protein localises to the cytoplasm. The enzyme catalyses ATP + H2O + cellular proteinSide 1 = ADP + phosphate + cellular proteinSide 2.. Part of the Sec protein translocase complex. Interacts with the SecYEG preprotein conducting channel. Has a central role in coupling the hydrolysis of ATP to the transfer of proteins into and across the cell membrane, serving as an ATP-driven molecular motor driving the stepwise translocation of polypeptide chains across the membrane. This is Protein translocase subunit SecA from Christiangramia forsetii (strain DSM 17595 / CGMCC 1.15422 / KT0803) (Gramella forsetii).